A 213-amino-acid chain; its full sequence is Urease accessory protein UreG (213 aa).

GTP is bound at residue Gly-17 to Thr-24.

Belongs to the SIMIBI class G3E GTPase family. UreG subfamily. Homodimer. UreD, UreF and UreG form a complex that acts as a GTP-hydrolysis-dependent molecular chaperone, activating the urease apoprotein by helping to assemble the nickel containing metallocenter of UreC. The UreE protein probably delivers the nickel.

It is found in the cytoplasm. In terms of biological role, facilitates the functional incorporation of the urease nickel metallocenter. This process requires GTP hydrolysis, probably effectuated by UreG. In Delftia acidovorans (strain DSM 14801 / SPH-1), this protein is Urease accessory protein UreG.